The sequence spans 369 residues: S-adenosylmethionine:tRNA ribosyltransferase-isomerase (369 aa).

The protein belongs to the QueA family. As to quaternary structure, monomer.

Its subcellular location is the cytoplasm. The enzyme catalyses 7-aminomethyl-7-carbaguanosine(34) in tRNA + S-adenosyl-L-methionine = epoxyqueuosine(34) in tRNA + adenine + L-methionine + 2 H(+). It functions in the pathway tRNA modification; tRNA-queuosine biosynthesis. In terms of biological role, transfers and isomerizes the ribose moiety from AdoMet to the 7-aminomethyl group of 7-deazaguanine (preQ1-tRNA) to give epoxyqueuosine (oQ-tRNA). The sequence is that of S-adenosylmethionine:tRNA ribosyltransferase-isomerase from Synechococcus sp. (strain CC9311).